The following is a 504-amino-acid chain: Maturase K (504 aa).

This sequence belongs to the intron maturase 2 family. MatK subfamily.

It is found in the plastid. It localises to the chloroplast. Usually encoded in the trnK tRNA gene intron. Probably assists in splicing its own and other chloroplast group II introns. This Aucuba japonica (Japanese laurel) protein is Maturase K.